The following is a 471-amino-acid chain: GTPase Der (471 aa).

2 EngA-type G domains span residues 3 to 168 and 178 to 353; these read PIVA…PDLS and VRVA…ANHA. GTP contacts are provided by residues 9-16, 56-60, 120-123, 184-191, 231-235, and 296-299; these read GRPNVGKS, DTGGI, NKVE, DTAGM, and NKWD. A KH-like domain is found at 354–438; that stretch reads RRISTRELND…PINLYFRTRE (85 aa).

It belongs to the TRAFAC class TrmE-Era-EngA-EngB-Septin-like GTPase superfamily. EngA (Der) GTPase family. As to quaternary structure, associates with the 50S ribosomal subunit.

Functionally, GTPase that plays an essential role in the late steps of ribosome biogenesis. The polypeptide is GTPase Der (Symbiobacterium thermophilum (strain DSM 24528 / JCM 14929 / IAM 14863 / T)).